A 111-amino-acid chain; its full sequence is Putative carnobacteriocin-B2 immunity protein (111 aa).

Functionally, could impart immunity to carnobacteriocin-B2 to naturally sensitive host strains. The protein is Putative carnobacteriocin-B2 immunity protein of Carnobacterium maltaromaticum (Carnobacterium piscicola).